The sequence spans 175 residues: Inorganic pyrophosphatase (175 aa).

Substrate is bound by residues Lys30, Arg44, and Tyr56. 3 residues coordinate Mg(2+): Asp66, Asp71, and Asp103. Tyr142 provides a ligand contact to substrate.

The protein belongs to the PPase family. In terms of assembly, homohexamer. Mg(2+) is required as a cofactor.

The protein resides in the cytoplasm. It carries out the reaction diphosphate + H2O = 2 phosphate + H(+). Functionally, catalyzes the hydrolysis of inorganic pyrophosphate (PPi) forming two phosphate ions. This is Inorganic pyrophosphatase from Pseudomonas aeruginosa (strain ATCC 15692 / DSM 22644 / CIP 104116 / JCM 14847 / LMG 12228 / 1C / PRS 101 / PAO1).